The chain runs to 213 residues: E3 ubiquitin-protein ligase NleG8 (213 aa).

The segment at 136 to 189 (CPITLCVPETGVFVKNARCSKVCSLYDISALTEMLRRNASHPLSREAFTPGMIV) is RING/U-box domain. A PDZ-binding motif motif is present at residues 211 to 213 (TRL).

Belongs to the NleG E3 ligase family. In terms of assembly, interacts with host GOPC (human protein).

It localises to the secreted. The protein localises to the host cytoplasm. The catalysed reaction is S-ubiquitinyl-[E2 ubiquitin-conjugating enzyme]-L-cysteine + [acceptor protein]-L-lysine = [E2 ubiquitin-conjugating enzyme]-L-cysteine + N(6)-ubiquitinyl-[acceptor protein]-L-lysine.. In terms of biological role, effector proteins function to alter host cell physiology and promote bacterial survival in host tissues. This protein is an E3 ubiquitin-protein ligase that probably interferes with the host's ubiquitination pathway and targets host proteins for proteasomal degradation. Mice infected with a strain of bacteria deleted for this gene had an increased survival rate. Can be ubiquitinylated, and ubiquitinate ubiquitin, giving rise to polyubiquitin chains (in vitro). This chain is E3 ubiquitin-protein ligase NleG8, found in Citrobacter rodentium.